Reading from the N-terminus, the 60-residue chain is Large ribosomal subunit protein bL32 (60 aa).

Belongs to the bacterial ribosomal protein bL32 family.

This Fervidobacterium nodosum (strain ATCC 35602 / DSM 5306 / Rt17-B1) protein is Large ribosomal subunit protein bL32.